We begin with the raw amino-acid sequence, 115 residues long: Large ribosomal subunit protein uL22c (115 aa).

This sequence belongs to the universal ribosomal protein uL22 family. Part of the 50S ribosomal subunit.

The protein localises to the plastid. It is found in the chloroplast. In terms of biological role, this protein binds specifically to 23S rRNA. Functionally, the globular domain of the protein is located near the polypeptide exit tunnel on the outside of the subunit, while an extended beta-hairpin is found that lines the wall of the exit tunnel in the center of the 70S ribosome. The polypeptide is Large ribosomal subunit protein uL22c (rpl22) (Thalassiosira pseudonana (Marine diatom)).